Reading from the N-terminus, the 102-residue chain is Small ribosomal subunit protein uS10 (102 aa).

It belongs to the universal ribosomal protein uS10 family. Part of the 30S ribosomal subunit.

Functionally, involved in the binding of tRNA to the ribosomes. The polypeptide is Small ribosomal subunit protein uS10 (Clostridium novyi (strain NT)).